The chain runs to 214 residues: Cytochrome c biogenesis ATP-binding export protein CcmA (214 aa).

Residues 4-214 enclose the ABC transporter domain; the sequence is LAVDQLTVSR…FDHGFDGAFL (211 aa). 36-43 lines the ATP pocket; sequence GPNGIGKT.

This sequence belongs to the ABC transporter superfamily. CcmA exporter (TC 3.A.1.107) family. The complex is composed of two ATP-binding proteins (CcmA) and two transmembrane proteins (CcmB).

The protein localises to the cell inner membrane. The enzyme catalyses heme b(in) + ATP + H2O = heme b(out) + ADP + phosphate + H(+). Part of the ABC transporter complex CcmAB involved in the biogenesis of c-type cytochromes; once thought to export heme, this seems not to be the case, but its exact role is uncertain. Responsible for energy coupling to the transport system. The chain is Cytochrome c biogenesis ATP-binding export protein CcmA from Rhodobacter capsulatus (strain ATCC BAA-309 / NBRC 16581 / SB1003).